Consider the following 183-residue polypeptide: 2-epi-5-epi-valiolone epimerase (183 aa).

The region spanning 11 to 155 is the VOC domain; sequence AVHHVAYTVP…WGMQLELINL (145 aa). His14, Glu76, His99, and Glu151 together coordinate a divalent metal cation.

In terms of assembly, homodimer. A divalent metal cation is required as a cofactor.

The catalysed reaction is 2-epi-5-epi-valiolone = 5-epi-valiolone. It functions in the pathway antibiotic biosynthesis. In terms of biological role, catalyzes the epimerization of 2-epi-5-epi-valiolone to 5-epi-valiolone. Involved in cetoniacytone A biosynthesis. The protein is 2-epi-5-epi-valiolone epimerase of Actinomyces sp.